The chain runs to 180 residues: Large ribosomal subunit protein uL5 (180 aa).

It belongs to the universal ribosomal protein uL5 family. In terms of assembly, part of the 50S ribosomal subunit; part of the 5S rRNA/L5/L18/L25 subcomplex. Contacts the 5S rRNA and the P site tRNA. Forms a bridge to the 30S subunit in the 70S ribosome.

Its function is as follows. This is one of the proteins that bind and probably mediate the attachment of the 5S RNA into the large ribosomal subunit, where it forms part of the central protuberance. In the 70S ribosome it contacts protein S13 of the 30S subunit (bridge B1b), connecting the 2 subunits; this bridge is implicated in subunit movement. Contacts the P site tRNA; the 5S rRNA and some of its associated proteins might help stabilize positioning of ribosome-bound tRNAs. This is Large ribosomal subunit protein uL5 from Chlamydia abortus (strain DSM 27085 / S26/3) (Chlamydophila abortus).